A 916-amino-acid polypeptide reads, in one-letter code: Isoleucine--tRNA ligase (916 aa).

The short motif at 58-68 (PYANGHLHIGH) is the 'HIGH' region element. An L-isoleucyl-5'-AMP-binding site is contributed by E568. The short motif at 609–613 (KMSKS) is the 'KMSKS' region element. K612 serves as a coordination point for ATP. Zn(2+) is bound by residues C891, C894, C906, and C909.

Belongs to the class-I aminoacyl-tRNA synthetase family. IleS type 1 subfamily. Monomer. Requires Zn(2+) as cofactor.

The protein resides in the cytoplasm. The catalysed reaction is tRNA(Ile) + L-isoleucine + ATP = L-isoleucyl-tRNA(Ile) + AMP + diphosphate. Catalyzes the attachment of isoleucine to tRNA(Ile). As IleRS can inadvertently accommodate and process structurally similar amino acids such as valine, to avoid such errors it has two additional distinct tRNA(Ile)-dependent editing activities. One activity is designated as 'pretransfer' editing and involves the hydrolysis of activated Val-AMP. The other activity is designated 'posttransfer' editing and involves deacylation of mischarged Val-tRNA(Ile). This is Isoleucine--tRNA ligase from Campylobacter fetus subsp. fetus (strain 82-40).